The chain runs to 318 residues: MSSSSSRNAFEDGKYKSNLLTLDSSSRCCKITPSSRASPSPPKQLLVATPVEEGDYPVVMLLHGYLLYNSFYSQLMLHVSSHGFILIAPQLYSIAGPDTMDEIKSTAEIMDWLSVGLNHFLPAQVTPNLSKFALSGHSRGGKTAFAVALKKFGYSSNLKISTLIGIDPVDGTGKGKQTPPPVLAYLPNSFDLDKTPILVIGSGLGETARNPLFPPCAPPGVNHREFFRECQGPAWHFVAKDYGHLDMLDDDTKGIRGKSSYCLCKNGEERRPMRRFVGGLVVSFLKAYLEGDDRELVKIKDGCHEDVPVEIQEFEVIM.

The short motif at 136–140 (GHSRG) is the GXSXG element. Catalysis depends on Ser-138, which acts as the Nucleophile. Catalysis depends on charge relay system residues Asp-167 and His-244.

It belongs to the AB hydrolase superfamily. Lipase family. As to expression, expressed in leaves, flowers and flower buds, but not in roots.

It localises to the cytoplasm. The protein localises to the cytosol. It carries out the reaction a chlorophyll + H2O = a chlorophyllide + phytol + H(+). The catalysed reaction is chlorophyll a + H2O = phytol + chlorophyllide a + H(+). It participates in porphyrin-containing compound metabolism; chlorophyll degradation. In terms of biological role, catalyzes the hydrolysis of ester bond in chlorophyll to yield chlorophyllide and phytol. Does not seem to be required for chlorophyll degradation during senescence. The protein is Chlorophyllase-2 of Arabidopsis thaliana (Mouse-ear cress).